Here is a 484-residue protein sequence, read N- to C-terminus: ATP-dependent rRNA helicase RRP3 (484 aa).

Residues 1–10 (MAIVGSNSVS) are compositionally biased toward polar residues. The disordered stretch occupies residues 1-61 (MAIVGSNSVS…SSQKSKNIVE (61 aa)). The segment covering 18 to 54 (RNDARDLAEKIKRNALKKQEQDKKQQLEEESKPESSQ) has biased composition (basic and acidic residues). Positions 71-99 (STFSELKLVPELLEAIQQMKFSKPTPIQS) match the Q motif motif. A Helicase ATP-binding domain is found at 102–273 (IPHALEGKDI…RASLHNPVRV (172 aa)). 115–122 (AQTGSGKT) is a binding site for ATP. The DEAD box signature appears at 221 to 224 (DEAD). The region spanning 300–444 (YLIHLLNEFV…KDPSPPKAML (145 aa)) is the Helicase C-terminal domain. A disordered region spans residues 460–484 (RQTKEFHEKTRRGRRGKDDKDREEH). The span at 475 to 484 (GKDDKDREEH) shows a compositional bias: basic and acidic residues.

Belongs to the DEAD box helicase family. DDX47/RRP3 subfamily. In terms of assembly, interacts with the SSU processome.

Its subcellular location is the nucleus. The enzyme catalyses ATP + H2O = ADP + phosphate + H(+). In terms of biological role, ATP-dependent rRNA helicase required for pre-ribosomal RNA processing. Involved in the maturation of the 35S-pre-rRNA and to its cleavage to mature 18S rRNA. The chain is ATP-dependent rRNA helicase RRP3 from Scheffersomyces stipitis (strain ATCC 58785 / CBS 6054 / NBRC 10063 / NRRL Y-11545) (Yeast).